The following is a 273-amino-acid chain: Spore development regulator vosA (273 aa).

Positions 66-75 (STTQELQSTQ) are enriched in low complexity. The segment at 66–86 (STTQELQSTQPIAVRQQPRAA) is disordered. Residues 70–253 (ELQSTQPIAV…KEQGCIISIK (184 aa)) form the Velvet domain. Residues 211 to 218 (FPTLTEIK) carry the Nuclear localization signal motif. Residues 254-267 (KGNERARPRGADGR) are compositionally biased toward basic and acidic residues. The disordered stretch occupies residues 254–273 (KGNERARPRGADGRSDDEDD).

Belongs to the velvet family. VosA subfamily. In terms of assembly, forms a heterodimeric complex with velB; the formation of the velB-vosA complex is light-dependent.

The protein localises to the nucleus. In terms of biological role, component of the velB-vosA heterodimeric complex that plays a dual role in activating genes associated with spore maturation and repressing certain development-associated genes. The complex binds DNA through the DNA-binding domain of vosA that recognizes an 11-nucleotide consensus sequence 5'-CTGGCCGCGGC-3' consisting of two motifs in the promoters of key developmental regulatory genes. Positively regulates the expression of wetA and represses abaA and brlA. Acts as a crucial regulator of both conidiation capacity and conidial quality. Responsible for the synthesis and accumulation of intracellular trehalose. This chain is Spore development regulator vosA, found in Beauveria bassiana (strain ARSEF 2860) (White muscardine disease fungus).